The sequence spans 578 residues: ATP-dependent RNA helicase dbp3 (578 aa).

Positions 59-69 are enriched in basic and acidic residues; sequence KRSADEEASVK. Residues 59 to 117 form a disordered region; the sequence is KRSADEEASVKRKEKKSKHEHKKHKKDKPSADKDRISKKDKKKSKKGKSKTKEESIEIN. Residues 70–85 are compositionally biased toward basic residues; that stretch reads RKEKKSKHEHKKHKKD. Positions 86-95 are enriched in basic and acidic residues; sequence KPSADKDRIS. A compositionally biased stretch (basic residues) spans 96 to 107; sequence KKDKKKSKKGKS. Residues 167–193 carry the Q motif motif; the sequence is LQFDELDVSAKLREGLKNYKEPTPIQA. Positions 196–373 constitute a Helicase ATP-binding domain; sequence WPYLLAGRDV…ATFLKDPVKI (178 aa). 209 to 216 is a binding site for ATP; it reads AETGSGKT. The DEAD box motif lies at 316–319; the sequence is DEAD. The Helicase C-terminal domain maps to 402–550; the sequence is MLDNLLRKHL…DIPEGLFKFG (149 aa).

The protein belongs to the DEAD box helicase family. DDX5/DBP2 subfamily.

It is found in the nucleus. Its subcellular location is the nucleolus. The enzyme catalyses ATP + H2O = ADP + phosphate + H(+). ATP-dependent RNA helicase required for 60S ribosomal subunit synthesis. Involved in efficient pre-rRNA processing, predominantly at site A3, which is necessary for the normal formation of 25S and 5.8S rRNAs. The chain is ATP-dependent RNA helicase dbp3 (dbp3) from Schizosaccharomyces pombe (strain 972 / ATCC 24843) (Fission yeast).